A 288-amino-acid polypeptide reads, in one-letter code: 2-methoxy-6-polyprenyl-1,4-benzoquinol methylase, mitochondrial (288 aa).

The N-terminal 27 residues, 1–27 (MALRSVSRRLGSRILNQRSFVASLHSH), are a transit peptide targeting the mitochondrion. S-adenosyl-L-methionine-binding positions include Thr-94, Asp-130, and 160–161 (DA).

The protein belongs to the class I-like SAM-binding methyltransferase superfamily. MenG/UbiE family. Component of a multi-subunit COQ enzyme complex.

It localises to the mitochondrion inner membrane. It carries out the reaction a 2-methoxy-6-(all-trans-polyprenyl)benzene-1,4-diol + S-adenosyl-L-methionine = a 5-methoxy-2-methyl-3-(all-trans-polyprenyl)benzene-1,4-diol + S-adenosyl-L-homocysteine + H(+). The protein operates within cofactor biosynthesis; ubiquinone biosynthesis. In terms of biological role, methyltransferase required for the conversion of 2-polyprenyl-6-methoxy-1,4-benzoquinol (DDMQH2) to 2-polyprenyl-3-methyl-6-methoxy-1,4-benzoquinol (DMQH2). This is 2-methoxy-6-polyprenyl-1,4-benzoquinol methylase, mitochondrial from Arabidopsis thaliana (Mouse-ear cress).